We begin with the raw amino-acid sequence, 134 residues long: Large ribosomal subunit protein bL19 (134 aa).

The segment at 110-134 is disordered; the sequence is ARLHQEEGPSSAAPASTPPAAAPQA. Residues 125-134 are compositionally biased toward pro residues; the sequence is STPPAAAPQA.

The protein belongs to the bacterial ribosomal protein bL19 family.

Its function is as follows. This protein is located at the 30S-50S ribosomal subunit interface and may play a role in the structure and function of the aminoacyl-tRNA binding site. This is Large ribosomal subunit protein bL19 from Anaeromyxobacter sp. (strain Fw109-5).